Here is a 92-residue protein sequence, read N- to C-terminus: Small ribosomal subunit protein bS20 (92 aa).

The disordered stretch occupies residues 1 to 20 (MANIASAKKRARQAENNRAH).

The protein belongs to the bacterial ribosomal protein bS20 family.

In terms of biological role, binds directly to 16S ribosomal RNA. This chain is Small ribosomal subunit protein bS20, found in Methylococcus capsulatus (strain ATCC 33009 / NCIMB 11132 / Bath).